The following is a 152-amino-acid chain: Ribosome maturation factor RimP (152 aa).

It belongs to the RimP family.

The protein resides in the cytoplasm. In terms of biological role, required for maturation of 30S ribosomal subunits. The polypeptide is Ribosome maturation factor RimP (Citrobacter koseri (strain ATCC BAA-895 / CDC 4225-83 / SGSC4696)).